The following is a 558-amino-acid chain: MATMAILQRTFSFILIFSIALHLKSLFAMETDSGAELKYLELIHEANEFTPDEEYDYIVVGGGTAGCPLAATLSENYSVLVLERGGDQHSHPNIIRQENVANNALPADDENSPSQAFTSEDGVPGLVRGRVLGGSSMINFGFYSRGDDYFFKNTGIEWDMDSVKTAYEWVEETLVHRPDNVSTWESSVRDALLEVGVLPDNGNTLDHLVGTKVSGSTFDSTGNRHGAVELLNKANPNNLRVIVHATVDRIIFSSSESSGPSVVRVVYHDSHGKSYQVGIRENGEVILSAGAFGSPQLLLVSGVGPSQNLTSLEIPVVHDQPFVGQYMIDNPRINLALMLPFSVVDSGTPVVGITGKGSYIETTSSSTPFTSPVSPLYFPYPYPPVNISMGYFFGKVSNPTSAGSLWLKSPSDVAITPSVRFNYFSKPEDVHQCADAVATYEKILKTKAMEMYKFKDHGGEKYFQIVGRQIPENTSDFESMATYCRKTVTTFYHYCGGCTVNKVVDSNLKVVGIGGLRVVDNSVFTSSPGTNPQATTMMLGRYMGVKIQQERAGSDGDN.

The first 28 residues, 1-28 (MATMAILQRTFSFILIFSIALHLKSLFA), serve as a signal peptide directing secretion. 64 to 65 (TA) is a binding site for FAD. N-linked (GlcNAc...) asparagine glycosylation is present at asparagine 76. Residues 83 to 84 (ER), valine 131, serine 135, and 139 to 142 (NFGF) each bind FAD. N-linked (GlcNAc...) asparagine glycosylation occurs at asparagine 180. Residue valine 247 coordinates FAD. Asparagine 308, asparagine 386, and asparagine 473 each carry an N-linked (GlcNAc...) asparagine glycan. Cysteine 433 and cysteine 484 are joined by a disulfide. 492–493 (YH) lines the FAD pocket. The active-site Proton donor is histidine 493. Catalysis depends on asparagine 531, which acts as the Proton acceptor. 532–533 (PQ) contributes to the FAD binding site.

This sequence belongs to the GMC oxidoreductase family. As to quaternary structure, monomer. Requires FAD as cofactor. Confined to nectaries.

The catalysed reaction is (E)-sinapyl alcohol + O2 = (E)-sinapaldehyde + H2O2. Its pathway is alkaloid biosynthesis. Its function is as follows. Involved in the production of blood-red nectar containing the alkaloid nesocodin and that serves as a visual attractant for pollinator visitation, including vertebrates such as Phelsuma geckos. The nectar is initially acidic and pale yellow, but slowly becomes alkaline before turning into red within 24 hours. Together with NEC1 and NEC2, facilitates the condensation of sinapaldehyde ((E)-3,5-dimethoxy-4-hydroxycinnamaldehyde) and proline to form nesocodin, a pigment with a stable imine bond. Catalyzes the conversion of sinapyl alcohol to sinapaldehyde. In Nesocodon mauritianus (Blue Mauritius bellflower), this protein is Sinalpyl alcohol oxidase Nec3.